The following is a 462-amino-acid chain: L-seryl-tRNA(Sec) selenium transferase (462 aa).

Residue Lys-292 is modified to N6-(pyridoxal phosphate)lysine.

It belongs to the SelA family. Pyridoxal 5'-phosphate serves as cofactor.

The protein localises to the cytoplasm. The enzyme catalyses L-seryl-tRNA(Sec) + selenophosphate + H(+) = L-selenocysteinyl-tRNA(Sec) + phosphate. Its pathway is aminoacyl-tRNA biosynthesis; selenocysteinyl-tRNA(Sec) biosynthesis; selenocysteinyl-tRNA(Sec) from L-seryl-tRNA(Sec) (bacterial route): step 1/1. Functionally, converts seryl-tRNA(Sec) to selenocysteinyl-tRNA(Sec) required for selenoprotein biosynthesis. This is L-seryl-tRNA(Sec) selenium transferase from Geobacter metallireducens (strain ATCC 53774 / DSM 7210 / GS-15).